A 275-amino-acid chain; its full sequence is 2,3,4,5-tetrahydropyridine-2,6-dicarboxylate N-succinyltransferase (275 aa).

Positions 106 and 143 each coordinate substrate.

The protein belongs to the transferase hexapeptide repeat family. Homotrimer.

It localises to the cytoplasm. The catalysed reaction is (S)-2,3,4,5-tetrahydrodipicolinate + succinyl-CoA + H2O = (S)-2-succinylamino-6-oxoheptanedioate + CoA. It participates in amino-acid biosynthesis; L-lysine biosynthesis via DAP pathway; LL-2,6-diaminopimelate from (S)-tetrahydrodipicolinate (succinylase route): step 1/3. The chain is 2,3,4,5-tetrahydropyridine-2,6-dicarboxylate N-succinyltransferase from Burkholderia mallei (strain NCTC 10247).